Here is a 215-residue protein sequence, read N- to C-terminus: Probable phosphoglycerate mutase GpmB (215 aa).

Substrate is bound by residues 8–15 (RHGETQWN), 21–22 (QG), arginine 58, arginine 60, 82–85 (ELNM), 104–105 (RR), and 151–152 (GI). Residue histidine 9 is the Tele-phosphohistidine intermediate of the active site. Glutamate 82 (proton donor/acceptor) is an active-site residue.

The protein belongs to the phosphoglycerate mutase family. GpmB subfamily.

It catalyses the reaction (2R)-2-phosphoglycerate = (2R)-3-phosphoglycerate. The protein operates within carbohydrate degradation; glycolysis; pyruvate from D-glyceraldehyde 3-phosphate: step 3/5. This Shigella dysenteriae serotype 1 (strain Sd197) protein is Probable phosphoglycerate mutase GpmB.